The primary structure comprises 268 residues: Mediator of RNA polymerase II transcription subunit 8 (268 aa).

The stretch at 1–28 (MQREEKQLEASLDALLSQVADLKNSLGS) forms a coiled coil. Serine 82 is modified (phosphoserine). Positions 133–163 (ADAAQKQIQSLNKMCSNLLEKISKEERESES) form a coiled coil. The segment at 142–151 (SLNKMCSNLL) is interaction with the Elongin BC complex. Disordered stretches follow at residues 156-176 (KEERESESGGLRPNKQTFNPT) and 193-268 (NWRP…PYQR). Positions 200–209 (SGPGQAGQPG) are enriched in gly residues. The segment covering 218 to 235 (SGLQQVQMAGAPSQQQPM) has biased composition (polar residues).

It belongs to the Mediator complex subunit 8 family. As to quaternary structure, component of the Mediator complex, which is composed of MED1, MED4, MED6, MED7, MED8, MED9, MED10, MED11, MED12, MED13, MED13L, MED14, MED15, MED16, MED17, MED18, MED19, MED20, MED21, MED22, MED23, MED24, MED25, MED26, MED27, MED29, MED30, MED31, CCNC, CDK8 and CDC2L6/CDK11. The MED12, MED13, CCNC and CDK8 subunits form a distinct module termed the CDK8 module. Mediator containing the CDK8 module is less active than Mediator lacking this module in supporting transcriptional activation. Individual preparations of the Mediator complex lacking one or more distinct subunits have been variously termed ARC, CRSP, DRIP, PC2, SMCC and TRAP. May be part of a multisubunit E3 ubiquitin-protein ligase complex with the elongin BC complex (ELOB and ELOC), CUL2 and RBX1.

The protein resides in the nucleus. The protein operates within protein modification; protein ubiquitination. Functionally, component of the Mediator complex, a coactivator involved in the regulated transcription of nearly all RNA polymerase II-dependent genes. Mediator functions as a bridge to convey information from gene-specific regulatory proteins to the basal RNA polymerase II transcription machinery. Mediator is recruited to promoters by direct interactions with regulatory proteins and serves as a scaffold for the assembly of a functional preinitiation complex with RNA polymerase II and the general transcription factors. May play a role as a target recruitment subunit in E3 ubiquitin-protein ligase complexes and thus in ubiquitination and subsequent proteasomal degradation of target proteins. The polypeptide is Mediator of RNA polymerase II transcription subunit 8 (MED8) (Homo sapiens (Human)).